A 447-amino-acid polypeptide reads, in one-letter code: Tol-Pal system protein TolB (447 aa).

The first 29 residues, 1–29, serve as a signal peptide directing secretion; the sequence is MITMSRIRSLAAFAVFVILGVAAVLPAQA.

The protein belongs to the TolB family. In terms of assembly, the Tol-Pal system is composed of five core proteins: the inner membrane proteins TolA, TolQ and TolR, the periplasmic protein TolB and the outer membrane protein Pal. They form a network linking the inner and outer membranes and the peptidoglycan layer.

Its subcellular location is the periplasm. Part of the Tol-Pal system, which plays a role in outer membrane invagination during cell division and is important for maintaining outer membrane integrity. The chain is Tol-Pal system protein TolB from Paramagnetospirillum magneticum (strain ATCC 700264 / AMB-1) (Magnetospirillum magneticum).